The following is a 1168-amino-acid chain: TBC1 domain family member 1 (1168 aa).

Phosphoserine is present on serine 146. The segment at 203–238 (VSGSRGSESPRPNPPHAAPTGSQEPVRRPMRKSFSQ) is disordered. Serine 235 is subject to Phosphoserine; by PKB/AKT1. Serine 237 carries the post-translational modification Phosphoserine. A PID domain is found at 246–404 (FRKELQDGGL…LHKLCERIEG (159 aa)). The residue at position 503 (serine 503) is a Phosphoserine. Threonine 505 is subject to Phosphothreonine; by PKB/AKT1. A phosphoserine mark is found at serine 507, serine 525, and serine 527. The segment covering 532 to 542 (SSLSSTLSNTS) has biased composition (low complexity). Disordered stretches follow at residues 532-551 (SSLS…CEKE) and 564-587 (GSSE…LSPQ). Serine 565, serine 566, serine 570, serine 571, and serine 585 each carry phosphoserine. A Phosphothreonine modification is found at threonine 596. Serine 614 bears the Phosphoserine mark. Phosphoserine; by PKB/AKT1 is present on serine 627. Disordered regions lie at residues 628 to 658 (VSTE…KTRR) and 678 to 717 (SSSR…KRTS). The span at 632 to 645 (TPHERKDFESKANH) shows a compositional bias: basic and acidic residues. Residues serine 695 and serine 941 each carry the phosphoserine modification. The 195-residue stretch at 800-994 (GVPRHHRGEI…RVFDMIFLQG (195 aa)) folds into the Rab-GAP TBC domain. Position 952 is a phosphotyrosine (tyrosine 952). The residue at position 1131 (threonine 1131) is a Phosphothreonine. Basic and acidic residues predominate over residues 1145–1159 (ELRRRSAEPSDREPE). The segment at 1145 to 1168 (ELRRRSAEPSDREPECTQPEPTGD) is disordered.

In terms of assembly, interacts with APPL2 (via BAR domain); interaction is dependent of TBC1D1 phosphorylation at Ser-235; interaction diminishes the phosphorylation of TBC1D1 at Thr-596, resulting in inhibition of SLC2A4/GLUT4 translocation and glucose uptake. In terms of processing, insulin-stimulated phosphorylation by AKT family kinases stimulates SLC2A4/GLUT4 translocation.

It is found in the nucleus. May act as a GTPase-activating protein for Rab family protein(s). May play a role in the cell cycle and differentiation of various tissues. Involved in the trafficking and translocation of GLUT4-containing vesicles and insulin-stimulated glucose uptake into cells. In Homo sapiens (Human), this protein is TBC1 domain family member 1 (TBC1D1).